Reading from the N-terminus, the 216-residue chain is Probable GTP-binding protein EngB (216 aa).

Positions 27–201 (EGIEVAFAGR…SQKLNTWFNE (175 aa)) constitute an EngB-type G domain. GTP is bound by residues 35–42 (GRSNAGKS), 62–66 (GRTQL), 80–83 (DLPG), 147–150 (TKAD), and 180–182 (FSS). Residues serine 42 and threonine 64 each contribute to the Mg(2+) site.

Belongs to the TRAFAC class TrmE-Era-EngA-EngB-Septin-like GTPase superfamily. EngB GTPase family. It depends on Mg(2+) as a cofactor.

Its function is as follows. Necessary for normal cell division and for the maintenance of normal septation. This is Probable GTP-binding protein EngB from Serratia proteamaculans (strain 568).